We begin with the raw amino-acid sequence, 449 residues long: Clusterin (449 aa).

A signal peptide spans 1–22 (MMKTLLLFVGLLLTWESGQVLG). Positions 78–81 (KKKK) match the Nuclear localization signal motif. N86 is a glycosylation site (N-linked (GlcNAc...) (complex) asparagine). 5 disulfide bridges follow: C102-C313, C113-C305, C116-C302, C121-C295, and C129-C285. N103 carries an N-linked (GlcNAc...) asparagine glycan. S133 carries the phosphoserine modification. N-linked (GlcNAc...) asparagine glycosylation is found at N145, N291, and N354. N374 carries N-linked (GlcNAc...) (complex) asparagine glycosylation. At S396 the chain carries Phosphoserine. The short motif at 443 to 447 (RKKHR) is the Nuclear localization signal element.

The protein belongs to the clusterin family. In terms of assembly, antiparallel disulfide-linked heterodimer of an alpha chain and a beta chain. Self-associates and forms higher oligomers. Interacts with a broad range of misfolded proteins, including APP, APOC2 and LYZ. Slightly acidic pH promotes interaction with misfolded proteins. Forms high-molecular weight oligomers upon interaction with misfolded proteins. Interacts with APOA1, LRP2, CLUAP1 and PON1. Interacts with the complement membrane attack complex. Interacts (via alpha chain) with XRCC6. Interacts with SYVN1, COMMD1, BTRC, CUL1 and with ubiquitin and SCF (SKP1-CUL1-F-box protein) E3 ubiquitin-protein ligase complexes. Interacts (via alpha chain) with BAX in stressed cells, where BAX undergoes a conformation change leading to association with the mitochondrial membrane. Does not interact with BAX in unstressed cells. Found in a complex with LTF, CLU, EPPIN and SEMG1. Interacts (immaturely glycosylated pre-secreted form) with HSPA5; this interaction promotes CLU stability and facilitates stress-induced CLU retrotranslocation from the secretory pathway to the mitochondria, thereby reducing stress-induced apoptosis by stabilizing mitochondrial membrane integrity. Interacts (isoform 4) with BCL2L1; this interaction releases and activates BAX and promotes cell death. Interacts with TGFBR2 and ACVR1. Interacts (secreted form) with STMN3; this interaction may act as an important modulator during neuronal differentiation. Interacts with VLDLR and LRP8. In terms of processing, proteolytically cleaved on its way through the secretory system, probably within the Golgi lumen. Proteolytic cleavage is not necessary for its chaperone activity. All non-secreted forms are not proteolytically cleaved. Chaperone activity of uncleaved forms is dependent on a non-reducing environment. Post-translationally, polyubiquitinated, leading to proteasomal degradation. Under cellular stress, the intracellular level of cleaved form is reduced due to proteasomal degradation. Extensively glycosylated with sulfated N-linked carbohydrates. About 30% of the protein mass is comprised of complex N-linked carbohydrate. Endoplasmic reticulum (ER) stress induces changes in glycosylation status and increases level of hypoglycosylated forms. Core carbohydrates are essential for chaperone activity. Non-secreted forms are hypoglycosylated or unglycosylated. Detected in blood plasma, cerebrospinal fluid, milk, seminal plasma and colon mucosa. Detected in the germinal center of colon lymphoid nodules and in colon parasympathetic ganglia of the Auerbach plexus (at protein level). Ubiquitous. Detected in brain, testis, ovary, liver and pancreas, and at lower levels in kidney, heart, spleen and lung.

It localises to the secreted. The protein resides in the cytoplasm. It is found in the nucleus. Its subcellular location is the mitochondrion membrane. The protein localises to the cytosol. It localises to the microsome. The protein resides in the endoplasmic reticulum. It is found in the mitochondrion. Its subcellular location is the perinuclear region. The protein localises to the cytoplasmic vesicle. It localises to the secretory vesicle. The protein resides in the chromaffin granule. Functions as extracellular chaperone that prevents aggregation of non native proteins. Prevents stress-induced aggregation of blood plasma proteins. Inhibits formation of amyloid fibrils by APP, APOC2, B2M, CALCA, CSN3, SNCA and aggregation-prone LYZ variants (in vitro). Does not require ATP. Maintains partially unfolded proteins in a state appropriate for subsequent refolding by other chaperones, such as HSPA8/HSC70. Does not refold proteins by itself. Binding to cell surface receptors triggers internalization of the chaperone-client complex and subsequent lysosomal or proteasomal degradation. Protects cells against apoptosis and against cytolysis by complement: inhibits assembly of the complement membrane attack complex (MAC) by preventing polymerization of C9 pore component of the MAC complex. Intracellular forms interact with ubiquitin and SCF (SKP1-CUL1-F-box protein) E3 ubiquitin-protein ligase complexes and promote the ubiquitination and subsequent proteasomal degradation of target proteins. Promotes proteasomal degradation of COMMD1 and IKBKB. Modulates NF-kappa-B transcriptional activity. A mitochondrial form suppresses BAX-dependent release of cytochrome c into the cytoplasm and inhibit apoptosis. Plays a role in the regulation of cell proliferation. An intracellular form suppresses stress-induced apoptosis by stabilizing mitochondrial membrane integrity through interaction with HSPA5. Secreted form does not affect caspase or BAX-mediated intrinsic apoptosis and TNF-induced NF-kappa-B-activity. Secreted form act as an important modulator during neuronal differentiation through interaction with STMN3. Plays a role in the clearance of immune complexes that arise during cell injury. Functionally, does not affect caspase or BAX-mediated intrinsic apoptosis and TNF-induced NF-kappa-B-activity. Its function is as follows. Does not affect caspase or BAX-mediated intrinsic apoptosis and TNF-induced NF-kappa-B-activity. Promotes cell death through interaction with BCL2L1 that releases and activates BAX. The polypeptide is Clusterin (Homo sapiens (Human)).